The sequence spans 1001 residues: TonB-dependent receptor P3 (1001 aa).

Positions 1–26 (MTTKNNKQLKSVLFMFLLLIGAYVKA) are cleaved as a signal peptide. Positions 109–116 (EEIVVIGY) match the TonB box motif. A TBDR plug domain is found at 120–232 (KKSDVSGSVS…ANGVIMVTTK (113 aa)). A TBDR beta-barrel domain is found at 238–1001 (KPTLELNTSY…TFTMGLNMKF (764 aa)). The short motif at 984 to 1001 (YGSYPNVRTFTMGLNMKF) is the TonB C-terminal box element.

The protein belongs to the TonB-dependent receptor family.

The protein resides in the cell outer membrane. TonB-dependent receptor probably involved in ulvan degradation. Ulvan is the main polysaccharide component of the Ulvales (green seaweed) cell wall. It is composed of disaccharide building blocks comprising 3-sulfated rhamnose (Rha3S) linked to D-glucuronic acid (GlcA), L-iduronic acid (IduA), or D-xylose (Xyl). The TonB-dependent receptor may mediate transport of ulvan oligosaccharides from the surface of the outer membrane to the periplasm for subsequent degradation. This chain is TonB-dependent receptor P3, found in Formosa agariphila (strain DSM 15362 / KCTC 12365 / LMG 23005 / KMM 3901 / M-2Alg 35-1).